A 309-amino-acid polypeptide reads, in one-letter code: D-alanine--D-alanine ligase (309 aa).

The ATP-grasp domain occupies 109–304 (KMVWAACGLP…FTALCLAILE (196 aa)). 135–190 (VAELGLPIFVKPVHEGSSMGATKVTAASQLKAAWERAARFDDLVLAEEFIVGAELT) contacts ATP. Positions 258, 271, and 273 each coordinate Mg(2+).

The protein belongs to the D-alanine--D-alanine ligase family. Mg(2+) is required as a cofactor. It depends on Mn(2+) as a cofactor.

It is found in the cytoplasm. It catalyses the reaction 2 D-alanine + ATP = D-alanyl-D-alanine + ADP + phosphate + H(+). Its pathway is cell wall biogenesis; peptidoglycan biosynthesis. Its function is as follows. Cell wall formation. The polypeptide is D-alanine--D-alanine ligase (Aromatoleum aromaticum (strain DSM 19018 / LMG 30748 / EbN1) (Azoarcus sp. (strain EbN1))).